An 831-amino-acid chain; its full sequence is Translation initiation factor IF-2 (831 aa).

A disordered region spans residues 116-157; that stretch reads IEPLETDKEVEQKQQNTEENKVEVSAKIVQDDEDIPSQIPKK. Residues 117 to 139 show a composition bias toward basic and acidic residues; sequence EPLETDKEVEQKQQNTEENKVEV. Residues 329–499 enclose the tr-type G domain; sequence TRAPVVTVMG…LLIAEMQDLK (171 aa). The interval 338–345 is G1; sequence GHVDHGKT. 338 to 345 contacts GTP; it reads GHVDHGKT. The G2 stretch occupies residues 363 to 367; it reads GITQH. Residues 385–388 form a G3 region; sequence DTPG. GTP is bound by residues 385–389 and 439–442; these read DTPGH and NKID. The G4 stretch occupies residues 439-442; that stretch reads NKID. The segment at 475 to 477 is G5; it reads SAL.

This sequence belongs to the TRAFAC class translation factor GTPase superfamily. Classic translation factor GTPase family. IF-2 subfamily.

It is found in the cytoplasm. In terms of biological role, one of the essential components for the initiation of protein synthesis. Protects formylmethionyl-tRNA from spontaneous hydrolysis and promotes its binding to the 30S ribosomal subunits. Also involved in the hydrolysis of GTP during the formation of the 70S ribosomal complex. The polypeptide is Translation initiation factor IF-2 (Rickettsia conorii (strain ATCC VR-613 / Malish 7)).